Here is a 406-residue protein sequence, read N- to C-terminus: Protrudin (406 aa).

Topologically, residues 1 to 71 (MQAAERDGVA…AAEGVRALLR (71 aa)) are cytoplasmic. Residues 1 to 97 (MQAAERDGVA…LLLTLDQAAW (97 aa)) form a sufficient for homooligomerization region. Residues 1 to 210 (MQAAERDGVA…LYLLPLCWVM (210 aa)) form a sufficient for localization to endoplasmic reticulum tubular network region. The helical transmembrane segment at 72–92 (WQRPLCSLLVCLGLNFLLLTL) threads the bilayer. Position 93 (Asp-93) is a topological domain, lumenal. Residues 94–114 (QAAWYSVLALLVLLPALLGYL) traverse the membrane as a helical segment. The Cytoplasmic portion of the chain corresponds to 115 to 192 (QETYRVRPSE…NPTVSSQFYG (78 aa)). The segment at residues 193–213 (ALLGSVCILYLLPLCWVMAIL) is an intramembrane region (helical). The Cytoplasmic segment spans residues 214–406 (NSTLFLGNSQ…CAQCNQMLIK (193 aa)). The interval 239-295 (LGTKPLESAPEPAKPLPTDAPPDRTPTPTSTEDLTPGSVEEAEEAEPDEEFKDAIEE) is disordered. A compositionally biased stretch (pro residues) spans 250–263 (PAKPLPTDAPPDRT). Acidic residues predominate over residues 278–295 (EEAEEAEPDEEFKDAIEE). The FYVE-type zinc finger occupies 339-405 (SNNFGTCTGC…VCAQCNQMLI (67 aa)). Residues Cys-345, Cys-348, Cys-361, Cys-364, Cys-369, Cys-372, Cys-397, and Cys-400 each contribute to the Zn(2+) site.

Can form homooligomers (monomers, dimers and tetramers).

The protein localises to the recycling endosome membrane. It is found in the endoplasmic reticulum membrane. It localises to the cell projection. Its subcellular location is the growth cone membrane. Functionally, key regulator of RAB11-dependent vesicular trafficking during neurite extension through polarized membrane transport. Promotes axonal elongation and contributes to the establishment of neuronal cell polarity. Involved in nerve growth factor-induced neurite formation in VAPA-dependent manner. Contributes to both the formation and stabilization of the tubular ER network. Involved in ER morphogenesis by regulating the sheet-to-tubule balance and possibly the density of tubule interconnections. In Gallus gallus (Chicken), this protein is Protrudin (ZFYVE27).